The primary structure comprises 230 residues: Ribose-5-phosphate isomerase A (230 aa).

Residues 29–32 (TGST), 85–88 (DGAD), and 98–101 (KGGG) contribute to the substrate site. Glutamate 107 (proton acceptor) is an active-site residue. A substrate-binding site is contributed by lysine 125.

This sequence belongs to the ribose 5-phosphate isomerase family. As to quaternary structure, homodimer.

It carries out the reaction aldehydo-D-ribose 5-phosphate = D-ribulose 5-phosphate. Its pathway is carbohydrate degradation; pentose phosphate pathway; D-ribose 5-phosphate from D-ribulose 5-phosphate (non-oxidative stage): step 1/1. Catalyzes the reversible conversion of ribose-5-phosphate to ribulose 5-phosphate. The polypeptide is Ribose-5-phosphate isomerase A (Staphylococcus haemolyticus (strain JCSC1435)).